Consider the following 624-residue polypeptide: 1-deoxy-D-xylulose-5-phosphate synthase (624 aa).

Thiamine diphosphate contacts are provided by residues H80 and 121–123; that span reads GHS. Residue D152 coordinates Mg(2+). Thiamine diphosphate contacts are provided by residues 153 to 154, N181, Y288, and E370; that span reads GA. N181 is a binding site for Mg(2+).

This sequence belongs to the transketolase family. DXPS subfamily. As to quaternary structure, homodimer. Mg(2+) is required as a cofactor. Thiamine diphosphate serves as cofactor.

The enzyme catalyses D-glyceraldehyde 3-phosphate + pyruvate + H(+) = 1-deoxy-D-xylulose 5-phosphate + CO2. Its pathway is metabolic intermediate biosynthesis; 1-deoxy-D-xylulose 5-phosphate biosynthesis; 1-deoxy-D-xylulose 5-phosphate from D-glyceraldehyde 3-phosphate and pyruvate: step 1/1. Functionally, catalyzes the acyloin condensation reaction between C atoms 2 and 3 of pyruvate and glyceraldehyde 3-phosphate to yield 1-deoxy-D-xylulose-5-phosphate (DXP). The protein is 1-deoxy-D-xylulose-5-phosphate synthase of Proteus mirabilis (strain HI4320).